The chain runs to 209 residues: Thiamine-phosphate synthase (209 aa).

4-amino-2-methyl-5-(diphosphooxymethyl)pyrimidine contacts are provided by residues 41–45 and Asn73; that span reads QYRNK. 2 residues coordinate Mg(2+): Asp74 and Asp93. Residue Ser112 coordinates 4-amino-2-methyl-5-(diphosphooxymethyl)pyrimidine. 139–141 contributes to the 2-[(2R,5Z)-2-carboxy-4-methylthiazol-5(2H)-ylidene]ethyl phosphate binding site; sequence SST. Lys142 is a binding site for 4-amino-2-methyl-5-(diphosphooxymethyl)pyrimidine. A 2-[(2R,5Z)-2-carboxy-4-methylthiazol-5(2H)-ylidene]ethyl phosphate-binding site is contributed by Gly168.

It belongs to the thiamine-phosphate synthase family. Requires Mg(2+) as cofactor.

The enzyme catalyses 2-[(2R,5Z)-2-carboxy-4-methylthiazol-5(2H)-ylidene]ethyl phosphate + 4-amino-2-methyl-5-(diphosphooxymethyl)pyrimidine + 2 H(+) = thiamine phosphate + CO2 + diphosphate. It carries out the reaction 2-(2-carboxy-4-methylthiazol-5-yl)ethyl phosphate + 4-amino-2-methyl-5-(diphosphooxymethyl)pyrimidine + 2 H(+) = thiamine phosphate + CO2 + diphosphate. It catalyses the reaction 4-methyl-5-(2-phosphooxyethyl)-thiazole + 4-amino-2-methyl-5-(diphosphooxymethyl)pyrimidine + H(+) = thiamine phosphate + diphosphate. The protein operates within cofactor biosynthesis; thiamine diphosphate biosynthesis; thiamine phosphate from 4-amino-2-methyl-5-diphosphomethylpyrimidine and 4-methyl-5-(2-phosphoethyl)-thiazole: step 1/1. In terms of biological role, condenses 4-methyl-5-(beta-hydroxyethyl)thiazole monophosphate (THZ-P) and 2-methyl-4-amino-5-hydroxymethyl pyrimidine pyrophosphate (HMP-PP) to form thiamine monophosphate (TMP). In Methylobacillus flagellatus (strain ATCC 51484 / DSM 6875 / VKM B-1610 / KT), this protein is Thiamine-phosphate synthase.